The following is a 340-amino-acid chain: Sulfotransferase ppzF (340 aa).

Its pathway is secondary metabolite biosynthesis. Sulfotransferase; part of the gene cluster that mediates the biosynthesis of pyrrolopyrazines, secondary metabolites showing insecticidal activity. The role of ppzF within the pathway has still to be determined. The single multifunctional NRPS ppzA is sufficient to produce peramine via condensation of 1-pyrroline-5-carboxylate and arginine, N-methylation of the alpha-amino group of arginine and reduction of the thioester and the cyclization to form an iminium ion resulting in release from the peptide synthetase. Deprotonation of this intermediate and oxidation of the pyrroline ring would give rise to peramine. In Epichloe species that produce only peramine, the peramine synthetase gene is not localized in a gene cluster, in contrast to Metarhizium species that contain additional pyrrolopyrazine biosynthesis genes. The 2-oxoglutarate-Fe(II) type oxidoreductase ppzC hydroxylates peramine to yield the newly identified compound 8-hydroxyperamine whereas ppzD converts L-proline into trans-4-hydroxy-L-proline, a precursor of peramine biosynthesis. This Metarhizium majus (strain ARSEF 297) protein is Sulfotransferase ppzF.